The primary structure comprises 370 residues: Vasopressin V2 receptor (370 aa).

Positions 1–21 are enriched in polar residues; sequence MFMASTTSAVPWHLSQPTPAG. The tract at residues 1-26 is disordered; it reads MFMASTTSAVPWHLSQPTPAGNGSEG. Residues 1-38 lie on the Extracellular side of the membrane; the sequence is MFMASTTSAVPWHLSQPTPAGNGSEGELLTARDPLLAQ. N-linked (GlcNAc...) asparagine glycosylation is present at Asn-22. A helical transmembrane segment spans residues 39–63; that stretch reads AELALLSTVFVAVALSNGLVLGALV. The Cytoplasmic portion of the chain corresponds to 64–77; the sequence is RRGRRGRWAPMHVF. A helical transmembrane segment spans residues 78–98; sequence IGHLCLADLAVALFQVLPQLA. At 99–113 the chain is on the extracellular side; that stretch reads WDATDRFRGPDALCR. A helical transmembrane segment spans residues 114–135; it reads AVKYLQMVGMYASSYMILAMTL. The Cytoplasmic portion of the chain corresponds to 136–159; it reads DRHRAICRPMLAHRHGGGTHWNRP. Residues 160–180 form a helical membrane-spanning segment; the sequence is VLLAWAFSLLFSLPQLFIFAQ. Residues 181-199 are Extracellular-facing; it reads RDVDGSGVLDCWARFAEPW. A helical transmembrane segment spans residues 200–219; that stretch reads GLRAYVTWIALMVFVAPALG. Over 220-270 the chain is Cytoplasmic; that stretch reads IAACQVLIFREIHASLGPGPVPRAGGPRRGCRPGSPAEGARVSAAVAKTVK. Residues 271–292 traverse the membrane as a helical segment; sequence MTLVIVIVYVLCWAPFFLVQLW. Residues 293 to 307 lie on the Extracellular side of the membrane; that stretch reads AAWDPEAPREGPPFV. The chain crosses the membrane as a helical span at residues 308 to 327; that stretch reads LLMLLASLNSCTNPWIYASF. The Cytoplasmic segment spans residues 328–370; it reads SSSISSELRSLLCCTWRRAPPSPGPQEESCATASSFLAKDTPS. 2 S-palmitoyl cysteine lipidation sites follow: Cys-340 and Cys-341. The interval 347–370 is disordered; it reads PPSPGPQEESCATASSFLAKDTPS.

This sequence belongs to the G-protein coupled receptor 1 family. Vasopressin/oxytocin receptor subfamily. As to quaternary structure, interacts with ARRDC4. Identified in a complex containing at least ARRDC4, V2R and HGS. Interacts with TMEM147.

It is found in the cell membrane. In terms of biological role, receptor for arginine vasopressin. The activity of this receptor is mediated by G proteins which activate adenylate cyclase. Involved in renal water reabsorption. This chain is Vasopressin V2 receptor (AVPR2), found in Bos taurus (Bovine).